Here is an 86-residue protein sequence, read N- to C-terminus: Alpha-toxin TbTx5 (86 aa).

The first 19 residues, 1 to 19, serve as a signal peptide directing secretion; that stretch reads MNDFVFLVVACLLTAGTEG. In terms of domain architecture, LCN-type CS-alpha/beta spans 21–82; it reads KDGYPVEGDN…EPTKTNGRCK (62 aa). Cystine bridges form between Cys-31–Cys-81, Cys-35–Cys-57, Cys-43–Cys-64, and Cys-47–Cys-66. Proline amide is present on Pro-83.

This sequence belongs to the long (4 C-C) scorpion toxin superfamily. Sodium channel inhibitor family. Alpha subfamily. As to expression, expressed by the venom gland.

It localises to the secreted. Its function is as follows. Alpha toxins bind voltage-independently at site-3 of sodium channels (Nav) and inhibit the inactivation of the activated channels, thereby blocking neuronal transmission. In Tityus bahiensis (Brazilian scorpion), this protein is Alpha-toxin TbTx5.